A 388-amino-acid chain; its full sequence is Pepsin A-4 (388 aa).

The N-terminal stretch at 1-15 (MKWLLLLGLVALSEC) is a signal peptide. A propeptide spans 16 to 62 (IMYKVPLIRKKSLRRTLSERGLLKDFLKKHNLNPARKYFPQWEAPTL) (activation peptide). A Peptidase A1 domain is found at 76 to 385 (YFGTIGIGTP…DRANNQVGLA (310 aa)). The active site involves Asp-94. Cys-107 and Cys-112 form a disulfide bridge. Ser-130 bears the Phosphoserine mark. Residues Cys-268 and Cys-272 are joined by a disulfide bond. Asp-277 is a catalytic residue. Cys-311 and Cys-344 are joined by a disulfide.

This sequence belongs to the peptidase A1 family.

It localises to the secreted. The catalysed reaction is Preferential cleavage: hydrophobic, preferably aromatic, residues in P1 and P1' positions. Cleaves 1-Phe-|-Val-2, 4-Gln-|-His-5, 13-Glu-|-Ala-14, 14-Ala-|-Leu-15, 15-Leu-|-Tyr-16, 16-Tyr-|-Leu-17, 23-Gly-|-Phe-24, 24-Phe-|-Phe-25 and 25-Phe-|-Tyr-26 bonds in the B chain of insulin.. Functionally, shows particularly broad specificity; although bonds involving phenylalanine and leucine are preferred, many others are also cleaved to some extent. The protein is Pepsin A-4 (PGA4) of Homo sapiens (Human).